We begin with the raw amino-acid sequence, 85 residues long: Serine protease inhibitor Kazal-type 7 (85 aa).

The first 19 residues, 1-19 (MKITGGLLLLCTVVYFCSS), serve as a signal peptide directing secretion. The 60-residue stretch at 26-85 (SPKKVDCSIYKKYPVVAIPCPITYLPVCGSDYITYGNECHLCTESLKSNGRVQFLHDGSC) folds into the Kazal-like domain. 3 disulfide bridges follow: Cys32–Cys67, Cys45–Cys64, and Cys53–Cys85.

It localises to the secreted. In terms of biological role, probable serine protease inhibitor. In Homo sapiens (Human), this protein is Serine protease inhibitor Kazal-type 7 (SPINK7).